Here is an 852-residue protein sequence, read N- to C-terminus: MEYERRGGRGDRTGRYGATDRSQDDGGENRSRDHDYRDMDYRSYPREYGSQEGKHEYDDSSEEQSAEIRGQLQSHGVQAREVRLMRNKSSGQSRGFAFVEFSHLQDATRWMEANQHSLNILGQKVSMHYSDPKPKINEDWLCNKCGVQNFKRREKCFKCGVPKSEAEQKLPLGTRLDQQALPLGGRELSQGLLPLPQPYQAQGVLTSQALSQGSEPSSENANDTIILRNLNPHSTMDSILGALAPYAVLSSSNVRVIKDKQTQLNRGFAFIQLSTIVEAAQLLQILQALHPPLTIDGKTINVEFAKGSKRDMASNEGSRINAASVASTAIAAAQWAISQASQGGESTWAAPEEPPVDYSYYQQDEGYGSSQGTDSLYAHGYLKNTKGPGMTGTKGDTSGAGPETSLEGGTDSVSLQAFSRAQPGAAPGLYQQSAEGSSGQGTATNSQSYTIMSPAVLKSELQSPTHPSSALPPATSPTAPESYSQYPVPDVSTYQYDETSGYYYDPQTGLYYDPNSQYYYNAQSQQYLYWDGERRTYIPALEQSADGHKDTGASSKEGKEKKEKHKTKTAQQIAKDMERWARSLNKQKENFKNSFQPISALRDDERRESATADAGYAILEKKGALAERQHTSMDLPKLASDDRPSPPRGLVAAYSGESDSEEEQERGGPEREEKLTDWQKLACLLCRRQFPSKEALIRHQQLSGLHKQNLEIHRRAHLSENELEALEKNDMEQMKYRDRAAERREKYGIPEPPEPKRRKYGGISTASVDFEQPTRDGLGSDNIGSRMLQAMGWKEGSGLGRKKQGIVTPIEAQTRVRGSGLGARGSSYGVTSTESYKETLHKTMVTRFNEAQ.

2 stretches are compositionally biased toward basic and acidic residues: residues 1 to 14 and 21 to 45; these read MEYE…DRTG and RSQD…RSYP. The interval 1-78 is disordered; the sequence is MEYERRGGRG…RGQLQSHGVQ (78 aa). An RRM 1 domain is found at 37-132; sequence RDMDYRSYPR…QKVSMHYSDP (96 aa). The residue at position 61 (S61) is a Phosphoserine. The RanBP2-type zinc-finger motif lies at 135 to 165; it reads KINEDWLCNKCGVQNFKRREKCFKCGVPKSE. Positions 223–307 constitute an RRM 2 domain; sequence DTIILRNLNP…KTINVEFAKG (85 aa). An N6-acetyllysine modification is found at K306. Disordered regions lie at residues 343-365, 386-410, 426-446, 459-489, 542-568, and 634-675; these read GGES…QQDE, KGPG…EGGT, APGL…ATNS, SELQ…YPVP, EQSA…HKTK, and DLPK…EEKL. Residues 430-446 are compositionally biased toward polar residues; that stretch reads YQQSAEGSSGQGTATNS. The span at 463-484 shows a compositional bias: low complexity; sequence SPTHPSSALPPATSPTAPESYS. The span at 545-561 shows a compositional bias: basic and acidic residues; that stretch reads ADGHKDTGASSKEGKEK. S640, S645, S655, S658, and S660 each carry phosphoserine. Residues 665–675 show a composition bias toward basic and acidic residues; that stretch reads ERGGPEREEKL. The C2H2-type; atypical zinc-finger motif lies at 681-706; that stretch reads LACLLCRRQFPSKEALIRHQQLSGLH. S703, S719, and S767 each carry phosphoserine. The interval 740–783 is disordered; sequence AAERREKYGIPEPPEPKRRKYGGISTASVDFEQPTRDGLGSDNI. Residues 780 to 826 enclose the G-patch domain; it reads SDNIGSRMLQAMGWKEGSGLGRKKQGIVTPIEAQTRVRGSGLGARGS. R824 is subject to Omega-N-methylarginine.

Associates with the spliceosome. Component of a large chromatin remodeling complex, at least composed of MYSM1, PCAF, RBM10 and KIF11/TRIP5.

The protein localises to the nucleus. In terms of biological role, binds to ssRNA containing the consensus sequence 5'-AGGUAA-3'. May be involved in post-transcriptional processing, most probably in mRNA splicing. Binds to RNA homopolymers, with a preference for poly(G) and poly(U) and little for poly(A). May bind to specific miRNA hairpins. This Rattus norvegicus (Rat) protein is RNA-binding protein 10.